A 168-amino-acid polypeptide reads, in one-letter code: uncharacterized protein (168 aa).

The span at 1 to 10 (MSPTTGPQPN) shows a compositional bias: pro residues. Disordered stretches follow at residues 1-23 (MSPTTGPQPNPRAWECHHTTGPQ) and 117-143 (EPGNVTVKRGPQPNPRAWECHRTRGPQ).

This is an uncharacterized protein from Homo sapiens (Human).